We begin with the raw amino-acid sequence, 215 residues long: Pyrrolidone-carboxylate peptidase (215 aa).

Catalysis depends on residues Glu-81, Cys-144, and His-168.

Belongs to the peptidase C15 family. Homotetramer.

Its subcellular location is the cytoplasm. The catalysed reaction is Release of an N-terminal pyroglutamyl group from a polypeptide, the second amino acid generally not being Pro.. Its function is as follows. Removes 5-oxoproline from various penultimate amino acid residues except L-proline. The chain is Pyrrolidone-carboxylate peptidase from Bacillus velezensis (strain DSM 23117 / BGSC 10A6 / LMG 26770 / FZB42) (Bacillus amyloliquefaciens subsp. plantarum).